Consider the following 501-residue polypeptide: Actin nucleation-promoting factor WASL (501 aa).

The residue at position 2 (S2) is an N-acetylserine. The WH1 domain maps to 31–138 (LGKKCVTMSS…KAVTDLLGRR (108 aa)). Residues 135 to 158 (LGRRQRKSEKRRDAPNGPNLPMAT) are disordered. The region spanning 200 to 213 (IGTPSNFQHIGHVG) is the CRIB domain. Residue S239 is modified to Phosphoserine; by TNK2. Residue Y253 is modified to Phosphotyrosine; by FAK1 and TNK2. 2 disordered regions span residues 263–403 (EAVK…GNKA) and 442–501 (QLKS…EWED). Positions 273 to 387 (APPPPPPSRG…PPGPPPPPGL (115 aa)) are enriched in pro residues. An Omega-N-methylarginine modification is found at R304. 2 WH2 domains span residues 401–418 (NKAALLDQIREGAQLKKV) and 429–446 (GRDALLDQIRQGIQLKSV). Residues 442 to 453 (QLKSVSDGQEST) are compositionally biased toward polar residues. Phosphoserine occurs at positions 480 and 481. Acidic residues predominate over residues 482–501 (DEDEDDDDEEDFEDDDEWED).

In terms of assembly, binds actin and the Arp2/3 complex. Interacts with CDC42. Interacts with FCHSD1. Interacts with FCHSD2. Binds to SH3 domains of GRB2. Interacts with the C-terminal SH3 domain of DNMBP. Interacts with SNX9. Interacts with the WW domains of PRPF40A/FBP11. Interacts with PTK2/FAK1. Interacts with PACSIN1, PACSIN2 and PACSIN3. Interacts with NOSTRIN. Binds to TNK2. Interacts with SNX33. Interacts with NONO (via second RRM domain); the interaction is direct. Component of a multiprotein complex with NONO and SFPQ; associates with the complex via direct interaction with NONO. In terms of processing, phosphorylation at Ser-239, Tyr-253, Ser-480 and Ser-481 enhances actin polymerization activity.

It is found in the cytoplasm. It localises to the cytoskeleton. The protein localises to the nucleus. In terms of biological role, regulates actin polymerization by stimulating the actin-nucleating activity of the Arp2/3 complex. Involved in various processes, such as mitosis and cytokinesis, via its role in the regulation of actin polymerization. Together with CDC42, involved in the extension and maintenance of the formation of thin, actin-rich surface projections called filopodia. In addition to its role in the cytoplasm, also plays a role in the nucleus by regulating gene transcription, probably by promoting nuclear actin polymerization. Binds to HSF1/HSTF1 and forms a complex on heat shock promoter elements (HSE) that negatively regulates HSP90 expression. Plays a role in dendrite spine morphogenesis. This chain is Actin nucleation-promoting factor WASL (Wasl), found in Mus musculus (Mouse).